Here is a 94-residue protein sequence, read N- to C-terminus: Citrate lyase acyl carrier protein (94 aa).

An O-(phosphoribosyl dephospho-coenzyme A)serine modification is found at Ser14.

This sequence belongs to the CitD family. In terms of assembly, oligomer with a subunit composition of (alpha,beta,gamma)6.

It localises to the cytoplasm. Functionally, covalent carrier of the coenzyme of citrate lyase. This Halothermothrix orenii (strain H 168 / OCM 544 / DSM 9562) protein is Citrate lyase acyl carrier protein.